The primary structure comprises 266 residues: Undecaprenyl-diphosphatase (266 aa).

A run of 8 helical transmembrane segments spans residues 1-21 (MNIFQTIVLALVQGLSEFLPI), 43-63 (FDVVVHMGTLSAVIFYYQAMI), 83-103 (SKLAWGVLLGTIPVGLVGMIF), 114-134 (VEIIAYATLVFGVLLGFASWF), 144-164 (TISWVDIGFIGMAQTLALIPG), 186-206 (IQFAFLLSIPVISLSLILILI), 219-239 (LLAMGFVVAAISAYVTIVFFI), and 245-265 (VGMMPFVIYRLTLGIFLFFFI).

It belongs to the UppP family.

The protein resides in the cell inner membrane. The enzyme catalyses di-trans,octa-cis-undecaprenyl diphosphate + H2O = di-trans,octa-cis-undecaprenyl phosphate + phosphate + H(+). Its function is as follows. Catalyzes the dephosphorylation of undecaprenyl diphosphate (UPP). Confers resistance to bacitracin. This is Undecaprenyl-diphosphatase from Ruthia magnifica subsp. Calyptogena magnifica.